The chain runs to 1836 residues: Druantia protein DruE (1836 aa).

One can recognise a Helicase ATP-binding domain in the interval 108 to 405; the sequence is SFLGEDASDL…FAQDLTGLSP (298 aa). Residue 121 to 128 coordinates ATP; the sequence is TGTGSGKT. A DEAH box motif is present at residues 347-350; that stretch reads DEAH. Positions 1014 to 1199 constitute a Helicase C-terminal domain; it reads DCTALMPFAL…EVKVNNPKIA (186 aa).

Its subcellular location is the cytoplasm. Its function is as follows. Component of antiviral defense system Druantia type I, composed of DruA, DruB, DruC, DruD and DruE. Expression of Druantia in E.coli (strain MG1655) confers resistance to phage lambda, SECphi18, SECphi27 and T4. This protein is probably a helicase. The protein is Druantia protein DruE of Escherichia coli (strain UMEA 4076-1).